A 247-amino-acid chain; its full sequence is 1-(5-phosphoribosyl)-5-[(5-phosphoribosylamino)methylideneamino] imidazole-4-carboxamide isomerase (247 aa).

The Proton acceptor role is filled by aspartate 8. Residue aspartate 129 is the Proton donor of the active site.

This sequence belongs to the HisA/HisF family.

Its subcellular location is the cytoplasm. It carries out the reaction 1-(5-phospho-beta-D-ribosyl)-5-[(5-phospho-beta-D-ribosylamino)methylideneamino]imidazole-4-carboxamide = 5-[(5-phospho-1-deoxy-D-ribulos-1-ylimino)methylamino]-1-(5-phospho-beta-D-ribosyl)imidazole-4-carboxamide. The protein operates within amino-acid biosynthesis; L-histidine biosynthesis; L-histidine from 5-phospho-alpha-D-ribose 1-diphosphate: step 4/9. In Rhodospirillum centenum (strain ATCC 51521 / SW), this protein is 1-(5-phosphoribosyl)-5-[(5-phosphoribosylamino)methylideneamino] imidazole-4-carboxamide isomerase.